The sequence spans 558 residues: Potassium-transporting ATPase potassium-binding subunit 1 (558 aa).

Helical transmembrane passes span 1-21 (MEIILFLTMMVMITYVFSGYL), 66-86 (FNGFMGFITFVLLIVQQWLFL), 127-147 (MIVMTYLMFTSSASGYAVCIA), 166-186 (IVRFIVRVLLPLSCLISILLM), 245-265 (IWSNFIEMGSMMLLPMSMLFL), 281-301 (ALILFVAMFFIFIAILTLTMW), 327-347 (FGAGLSALFTVITTAFTTGSV), 354-374 (LTPIGGLGPMVLMMLNVVFGG), 377-397 (VGLMNLLIFVLLTVFICSLMV), 416-436 (IVLVFLIHPILILVFSALAFM), 482-502 (ISTGIIMLLSRYIPIILQLMI), and 531-551 (IVFIVLLSGLTFIPVLLLGPI).

It belongs to the KdpA family. As to quaternary structure, the system is composed of three essential subunits: KdpA, KdpB and KdpC.

Its subcellular location is the cell membrane. In terms of biological role, part of the high-affinity ATP-driven potassium transport (or Kdp) system, which catalyzes the hydrolysis of ATP coupled with the electrogenic transport of potassium into the cytoplasm. This subunit binds the extracellular potassium ions and delivers the ions to the membrane domain of KdpB through an intramembrane tunnel. In Staphylococcus aureus (strain Mu50 / ATCC 700699), this protein is Potassium-transporting ATPase potassium-binding subunit 1.